We begin with the raw amino-acid sequence, 178 residues long: Probable chorismate pyruvate-lyase (178 aa).

Arg-72, Leu-110, and Glu-169 together coordinate substrate.

It belongs to the UbiC family.

It localises to the cytoplasm. It carries out the reaction chorismate = 4-hydroxybenzoate + pyruvate. It functions in the pathway cofactor biosynthesis; ubiquinone biosynthesis. In terms of biological role, removes the pyruvyl group from chorismate, with concomitant aromatization of the ring, to provide 4-hydroxybenzoate (4HB) for the ubiquinone pathway. This is Probable chorismate pyruvate-lyase from Nitrosomonas eutropha (strain DSM 101675 / C91 / Nm57).